Consider the following 188-residue polypeptide: Surfactant protein C (188 aa).

Positions 1-23 are excised as a propeptide; it reads MDMGSKEALMESPPDYSAAPRGR. Residues cysteine 28 and cysteine 29 are each lipidated (S-palmitoyl cysteine). The propeptide occupies 59–188; the sequence is HMSQKHTEMV…LCGEVPLIYI (130 aa). Residues 94–188 form the BRICHOS domain; the sequence is FPIGSTGIVT…LCGEVPLIYI (95 aa). Cysteine 121 and cysteine 180 are disulfide-bonded. The segment at 144–164 is disordered; the sequence is NPAEPPTQRGQDKGPAAGPAS.

The protein resides in the secreted. It is found in the extracellular space. It localises to the surface film. Pulmonary surfactant associated proteins promote alveolar stability by lowering the surface tension at the air-liquid interface in the peripheral air spaces. The polypeptide is Surfactant protein C (SFTPC) (Oryctolagus cuniculus (Rabbit)).